We begin with the raw amino-acid sequence, 273 residues long: Large ribosomal subunit protein uL2 (273 aa).

Residues 221–263 (RGTAMNPVDHPHGGGEGRNFGKHPVTPWGVQTKGKKTRHNKRT) form a disordered region. Positions 253–263 (KGKKTRHNKRT) are enriched in basic residues.

This sequence belongs to the universal ribosomal protein uL2 family. Part of the 50S ribosomal subunit. Forms a bridge to the 30S subunit in the 70S ribosome.

One of the primary rRNA binding proteins. Required for association of the 30S and 50S subunits to form the 70S ribosome, for tRNA binding and peptide bond formation. It has been suggested to have peptidyltransferase activity; this is somewhat controversial. Makes several contacts with the 16S rRNA in the 70S ribosome. This is Large ribosomal subunit protein uL2 from Actinobacillus succinogenes (strain ATCC 55618 / DSM 22257 / CCUG 43843 / 130Z).